The sequence spans 261 residues: Acyl-[acyl-carrier-protein]--UDP-N-acetylglucosamine O-acyltransferase (261 aa).

Belongs to the transferase hexapeptide repeat family. LpxA subfamily. In terms of assembly, homotrimer.

The protein resides in the cytoplasm. It carries out the reaction a (3R)-hydroxyacyl-[ACP] + UDP-N-acetyl-alpha-D-glucosamine = a UDP-3-O-[(3R)-3-hydroxyacyl]-N-acetyl-alpha-D-glucosamine + holo-[ACP]. It functions in the pathway glycolipid biosynthesis; lipid IV(A) biosynthesis; lipid IV(A) from (3R)-3-hydroxytetradecanoyl-[acyl-carrier-protein] and UDP-N-acetyl-alpha-D-glucosamine: step 1/6. Its function is as follows. Involved in the biosynthesis of lipid A, a phosphorylated glycolipid that anchors the lipopolysaccharide to the outer membrane of the cell. The sequence is that of Acyl-[acyl-carrier-protein]--UDP-N-acetylglucosamine O-acyltransferase from Sulfurimonas denitrificans (strain ATCC 33889 / DSM 1251) (Thiomicrospira denitrificans (strain ATCC 33889 / DSM 1251)).